The chain runs to 259 residues: Hydroxyethylthiazole kinase (259 aa).

Position 50 (Met-50) interacts with substrate. Residues Arg-122 and Thr-168 each coordinate ATP. Gly-195 is a substrate binding site.

This sequence belongs to the Thz kinase family. It depends on Mg(2+) as a cofactor.

It carries out the reaction 5-(2-hydroxyethyl)-4-methylthiazole + ATP = 4-methyl-5-(2-phosphooxyethyl)-thiazole + ADP + H(+). The protein operates within cofactor biosynthesis; thiamine diphosphate biosynthesis; 4-methyl-5-(2-phosphoethyl)-thiazole from 5-(2-hydroxyethyl)-4-methylthiazole: step 1/1. Functionally, catalyzes the phosphorylation of the hydroxyl group of 4-methyl-5-beta-hydroxyethylthiazole (THZ). In Escherichia coli O127:H6 (strain E2348/69 / EPEC), this protein is Hydroxyethylthiazole kinase.